A 400-amino-acid polypeptide reads, in one-letter code: MTTIGTPLSPRATKVMLLGSGELGREVLIALQRLGVETIAVDRYDNAPGQQVAHHARTIAMTDPDQLRALIEAERPDLVVPEIEAIATPALEALEAEGVTTVIPTARAARLTMDREGIRRLAAETLGLPTSPYRFCDSLEELTAAIEGGIGYPCVVKPVMSSSGKGQSKIDGPEGVAAAWEYAMSGSRVSNTRIIVEGFVDFDYEITLLTVRARGADGEIETRFCEPIGHRQVSGDYVESWQPHPMPGTALERARQIAGAVTRDLGGQGIFGVELFVKGDQVWFSEVSPRPHDTGMVTMVTQWQNEFELHARAILGLPVDTTLKSPGASAVIYGGVDAEGVVFDGVDLALRVPHTDIRLFGKPESFVNRRMGVALAFADDVDTARRNAAEAAGRVTPRAV.

Residues 22–23 (EL) and Glu82 each bind N(1)-(5-phospho-beta-D-ribosyl)glycinamide. ATP is bound by residues Arg115, Lys157, 162–167 (SSGKGQ), 197–200 (EGFV), and Glu205. The region spanning 120–315 (RLAAETLGLP…EFELHARAIL (196 aa)) is the ATP-grasp domain. Mg(2+) contacts are provided by Glu274 and Glu286. N(1)-(5-phospho-beta-D-ribosyl)glycinamide is bound by residues Asp293, Lys362, and 369 to 370 (RR).

Belongs to the PurK/PurT family. Homodimer.

It catalyses the reaction N(1)-(5-phospho-beta-D-ribosyl)glycinamide + formate + ATP = N(2)-formyl-N(1)-(5-phospho-beta-D-ribosyl)glycinamide + ADP + phosphate + H(+). The protein operates within purine metabolism; IMP biosynthesis via de novo pathway; N(2)-formyl-N(1)-(5-phospho-D-ribosyl)glycinamide from N(1)-(5-phospho-D-ribosyl)glycinamide (formate route): step 1/1. Functionally, involved in the de novo purine biosynthesis. Catalyzes the transfer of formate to 5-phospho-ribosyl-glycinamide (GAR), producing 5-phospho-ribosyl-N-formylglycinamide (FGAR). Formate is provided by PurU via hydrolysis of 10-formyl-tetrahydrofolate. The polypeptide is Formate-dependent phosphoribosylglycinamide formyltransferase (Mycolicibacterium vanbaalenii (strain DSM 7251 / JCM 13017 / BCRC 16820 / KCTC 9966 / NRRL B-24157 / PYR-1) (Mycobacterium vanbaalenii)).